The primary structure comprises 670 residues: MSKSFKLHSEFKPAGDQPEAIRKLEEGLENGLAHQTLLGVTGSGKTFTVANVIADLNRPTMVLAPNKTLAAQLYGEMKEFFPENAVEYFVSYYDYYQPEAYVPSSDTFIEKDASVNEHIEQMRLSATKALLERRDVVVVASVSAIYGLGDPDLYLKMMLHLTKGMIIDQRSILRRLSELQYSRNDQVFQRGTFRVRGEVIDIFPAESDEWALRVELFDEEVERLSIFDPLTGQLQHEVPRFTVYPKTHYVTPRERILQAMEDIKVELAERRKVLLANNKLIEEQRITQRTQFDLEMMNELGYCSGIENYSRYLSGRGPGEPPPTLFDYLPSDGLLIVDESHVTIPQIGGMYKGDRSRKETLVEYGFRLPSALDNRPMRFEEFEALAPQTIYVSATPGKYELEKSGGDVIDQVVRPTGLLDPLIEVRPVATQVDDLLSEIRIRAAINERVLVTTLTKRMAEDLTEYLEEHGARVRYLHSDIDTVERVEIIRDLRLGEFDVLVGINLLREGLDMPEVSLVAILDADKEGFLRSERSLIQTIGRAARNLNGKAILYGDRITASMEKAIGETERRRAKQQAYNEERGIIPQGLNKKIGDILQLGQPSTRGKGKGRGGKVADTNNYQSLAPKALDQKIRELEAKMYTHAQNLEFEQAAELRDQVHQLRQQFIAIS.

A Helicase ATP-binding domain is found at 26–183 (EGLENGLAHQ…RRLSELQYSR (158 aa)). 39-46 (GVTGSGKT) lines the ATP pocket. The short motif at 92 to 115 (YYDYYQPEAYVPSSDTFIEKDASV) is the Beta-hairpin element. The region spanning 431 to 597 (QVDDLLSEIR…GLNKKIGDIL (167 aa)) is the Helicase C-terminal domain. The segment at 600–620 (GQPSTRGKGKGRGGKVADTNN) is disordered. Residues 630-665 (DQKIRELEAKMYTHAQNLEFEQAAELRDQVHQLRQQ) form the UVR domain.

The protein belongs to the UvrB family. In terms of assembly, forms a heterotetramer with UvrA during the search for lesions. Interacts with UvrC in an incision complex.

The protein localises to the cytoplasm. The UvrABC repair system catalyzes the recognition and processing of DNA lesions. A damage recognition complex composed of 2 UvrA and 2 UvrB subunits scans DNA for abnormalities. Upon binding of the UvrA(2)B(2) complex to a putative damaged site, the DNA wraps around one UvrB monomer. DNA wrap is dependent on ATP binding by UvrB and probably causes local melting of the DNA helix, facilitating insertion of UvrB beta-hairpin between the DNA strands. Then UvrB probes one DNA strand for the presence of a lesion. If a lesion is found the UvrA subunits dissociate and the UvrB-DNA preincision complex is formed. This complex is subsequently bound by UvrC and the second UvrB is released. If no lesion is found, the DNA wraps around the other UvrB subunit that will check the other stand for damage. In Yersinia enterocolitica serotype O:8 / biotype 1B (strain NCTC 13174 / 8081), this protein is UvrABC system protein B.